A 155-amino-acid chain; its full sequence is SsrA-binding protein (155 aa).

This sequence belongs to the SmpB family.

The protein resides in the cytoplasm. Functionally, required for rescue of stalled ribosomes mediated by trans-translation. Binds to transfer-messenger RNA (tmRNA), required for stable association of tmRNA with ribosomes. tmRNA and SmpB together mimic tRNA shape, replacing the anticodon stem-loop with SmpB. tmRNA is encoded by the ssrA gene; the 2 termini fold to resemble tRNA(Ala) and it encodes a 'tag peptide', a short internal open reading frame. During trans-translation Ala-aminoacylated tmRNA acts like a tRNA, entering the A-site of stalled ribosomes, displacing the stalled mRNA. The ribosome then switches to translate the ORF on the tmRNA; the nascent peptide is terminated with the 'tag peptide' encoded by the tmRNA and targeted for degradation. The ribosome is freed to recommence translation, which seems to be the essential function of trans-translation. The chain is SsrA-binding protein from Bacillus cereus (strain ATCC 10987 / NRS 248).